A 615-amino-acid chain; its full sequence is TORTIFOLIA1-like protein 3 (615 aa).

5 HEAT repeats span residues 44-81 (GNLQSFISVILSVDTGDKPAVRKHCIHLLAVLSVSLPL), 86-123 (PFLSKILTRITRRLRDPDSSIRSTCVAAVSAISSRTTK), 125-163 (PFYSAFMKPLADTLFTEQEVNAQIGAALCLAAAIDSASD), 168-205 (RLGQTLLPRLEKLVKCNAFKAKSAGVVVIGSVIGAGGL), and 213-250 (GGLKGLVDCLLSFLVSEDWAARKAAAEALGRLATMERN). A disordered region spans residues 288-446 (VPDLSEEVSP…HHVLSENPNS (159 aa)). Residues 318 to 347 (RVGSTPAKSRTHLVNRSTPPGSSLATTARK) show a composition bias toward polar residues. The segment covering 391-406 (DEQHCDHDENAKETSH) has biased composition (basic and acidic residues). Residues 407 to 426 (SSHNTVQKLGGVSSSLNGNI) show a composition bias toward polar residues. Position 456 is a phosphoserine (S456).

This chain is TORTIFOLIA1-like protein 3, found in Arabidopsis thaliana (Mouse-ear cress).